Reading from the N-terminus, the 351-residue chain is MNVAIVGATGYGGIQAVNLLKKNKNYKISFLGGNKTSGSKWNDNFPFIYLDNDPYVEEISVDNISKNSDVALLCLPNGLSSTLTRKLLERGLKVIDLSADYRYKSLDEWKKVYSKEAAIYKRNDDDLCKEAVYGLPEINKEAISKGRLIACPGCYPTSALIPLAPYLSQGIIENEGIVIDSKSGTSGGGREPNQKLLLSECGEGLSAYGLINHRHTSEIEQVASLISGNKIELLFTPHLVPIPRGMHSTIYGRLRDPGLTSDDCRILLDNYYRNFKNIKVLPVDTFPSTKWVKNTNQIFLSVKVDIRNGRIIILSAIDNLLKGQTGQAIQNLNIMSGFSMDEGLELTNNYP.

Cys154 is a catalytic residue.

Belongs to the NAGSA dehydrogenase family. Type 1 subfamily.

The protein resides in the cytoplasm. The enzyme catalyses N-acetyl-L-glutamate 5-semialdehyde + phosphate + NADP(+) = N-acetyl-L-glutamyl 5-phosphate + NADPH + H(+). It participates in amino-acid biosynthesis; L-arginine biosynthesis; N(2)-acetyl-L-ornithine from L-glutamate: step 3/4. In terms of biological role, catalyzes the NADPH-dependent reduction of N-acetyl-5-glutamyl phosphate to yield N-acetyl-L-glutamate 5-semialdehyde. The polypeptide is N-acetyl-gamma-glutamyl-phosphate reductase (Prochlorococcus marinus (strain MIT 9215)).